Consider the following 397-residue polypeptide: Teichoic acid D-alanine hydrolase (397 aa).

Residues 1-23 (MKFNKVKLVIHACVLLFIIISIA) form the signal peptide.

The protein localises to the cell membrane. It carries out the reaction [(4-D-Ala)-(2-GlcNAc)-Rib-ol-P]n-[Gro-P]m-beta-D-ManNAc-(1-&gt;4)-alpha-D-GlcNAc-P-peptidoglycan + n H2O = [(2-GlcNAc)-Rib-ol-P]n-[Gro-P]m-beta-D-ManNAc-(1-&gt;4)-alpha-D-GlcNAc-P-peptidoglycan + n D-alanine.. In terms of biological role, catalyzes the liberation of D-alanyl moieties present on wall teichoic acid (WTA) and lipoteichoic acid (LTA). Affects the methicillin resistance level and autolysis in the presence of Triton X-100 as well as the cell wall structure. This Staphylococcus aureus (strain NCTC 8325 / PS 47) protein is Teichoic acid D-alanine hydrolase (fmtA).